Reading from the N-terminus, the 1384-residue chain is DNA-directed RNA polymerase subunit beta (1384 aa).

It belongs to the RNA polymerase beta chain family. The RNAP catalytic core consists of 2 alpha, 1 beta, 1 beta' and 1 omega subunit. When a sigma factor is associated with the core the holoenzyme is formed, which can initiate transcription.

It catalyses the reaction RNA(n) + a ribonucleoside 5'-triphosphate = RNA(n+1) + diphosphate. In terms of biological role, DNA-dependent RNA polymerase catalyzes the transcription of DNA into RNA using the four ribonucleoside triphosphates as substrates. The chain is DNA-directed RNA polymerase subunit beta from Xylella fastidiosa (strain M12).